The chain runs to 403 residues: Poly(rC)-binding protein 4 (403 aa).

3 consecutive KH domains span residues 17–67 (TLTL…TITG), 101–154 (PVTL…TVSG), and 241–293 (TSSQ…TITG).

It is found in the cytoplasm. Single-stranded nucleic acid binding protein that binds preferentially to oligo dC. The protein is Poly(rC)-binding protein 4 (PCBP4) of Homo sapiens (Human).